We begin with the raw amino-acid sequence, 1124 residues long: ATP-dependent DNA helicase mph1 (1124 aa).

Disordered stretches follow at residues 1 to 103 (MFTL…EARS) and 123 to 302 (QLTQ…PTQH). Acidic residues-rich tracts occupy residues 7-17 (DSSDYFDDDLG) and 169-178 (RDDEYDDDEE). Positions 210-222 (TPIIGQQSTTIEA) are enriched in polar residues. Residues 226 to 236 (LLDDIPDDAFD) are compositionally biased toward acidic residues. The span at 255–271 (SFTQSTNRPLGVRQTTL) shows a compositional bias: polar residues. A Helicase ATP-binding domain is found at 328–496 (IAQKGLFHNL…AVIDGLDISR (169 aa)). An ATP-binding site is contributed by 341–348 (LPTGLGKT). A DEAH box motif is present at residues 444–447 (DEAH). The Helicase C-terminal domain occupies 666–840 (YLKQVVLNHF…GTRFTFHDDM (175 aa)). Over residues 855–873 (KRAIDIPEENTVRDLPEPK) the composition is skewed to basic and acidic residues. Disordered regions lie at residues 855–923 (KRAI…TPEP) and 1016–1124 (MPKA…DSDD). Basic residues-rich tracts occupy residues 874–886 (RRGR…PKKF) and 906–916 (SKRRVPNKSKA).

It belongs to the DEAD box helicase family. DEAH subfamily. FANCM sub-subfamily. As to quaternary structure, interacts with the MHF histone-fold complex to form the FANCM-MHF complex.

Its subcellular location is the nucleus. It carries out the reaction ATP + H2O = ADP + phosphate + H(+). Its function is as follows. ATP-dependent DNA helicase involved in DNA damage repair by homologous recombination and in genome maintenance. Capable of unwinding D-loops. Plays a role in limiting crossover recombinants during mitotic DNA double-strand break (DSB) repair. Component of a FANCM-MHF complex which promotes gene conversion at blocked replication forks, probably by reversal of the stalled fork. This Aspergillus niger (strain ATCC MYA-4892 / CBS 513.88 / FGSC A1513) protein is ATP-dependent DNA helicase mph1.